We begin with the raw amino-acid sequence, 232 residues long: Phospholipase A2 hemilipin (232 aa).

The first 18 residues, 1 to 18 (MTFLILTILATVTPSLYS), serve as a signal peptide directing secretion. A propeptide spanning residues 19–105 (HVVQRELRVN…QRCSGSAEGR (87 aa)) is cleaved from the precursor. Ca(2+) contacts are provided by W115, G117, and G119. Intrachain disulfides connect C116/C137, C136/C175, C143/C168, C166/C206, and C211/C219. N124 is a glycosylation site (N-linked (GlcNAc...) asparagine). Residue H140 is part of the active site. Residue D141 coordinates Ca(2+). N-linked (GlcNAc...) asparagine glycosylation is present at N157. Positions 214–217 (KRDA) are excised as a propeptide.

The protein belongs to the phospholipase A2 family. Group III subfamily. As to quaternary structure, heterodimer composed of a small subunit and a large subunit; disulfid-linked. Ca(2+) is required as a cofactor. Expressed by the venom gland.

Its subcellular location is the secreted. It carries out the reaction a 1,2-diacyl-sn-glycero-3-phosphocholine + H2O = a 1-acyl-sn-glycero-3-phosphocholine + a fatty acid + H(+). In terms of biological role, scorpion venom phospholipase A2 (PLA2) that shows high hydrolytic activities towards lecithin and acts as an effective blocker of all angiogenesis key steps in vivo and in vitro. It has no effect on apoptosis and does not display hemolytic, inflammatory or neurotoxic effects. PLA2 catalyzes the calcium-dependent hydrolysis of the 2-acyl groups in 3-sn-phosphoglycerides. The polypeptide is Phospholipase A2 hemilipin (Hemiscorpius lepturus (Scorpion)).